A 268-amino-acid polypeptide reads, in one-letter code: 14-3-3-like protein GF14 iota (268 aa).

Phosphoserine occurs at positions 70 and 193. Phosphothreonine is present on Thr214. The interval Asp240 to Asn268 is disordered. Residues Asp248 to Lys261 show a composition bias toward basic and acidic residues.

It belongs to the 14-3-3 family. As to expression, expressed in flowers.

Its subcellular location is the nucleus. It is found in the cytoplasm. Its function is as follows. Is associated with a DNA binding complex that binds to the G box, a well-characterized cis-acting DNA regulatory element found in plant genes. The polypeptide is 14-3-3-like protein GF14 iota (Arabidopsis thaliana (Mouse-ear cress)).